The primary structure comprises 43 residues: Defensin-B (43 aa).

Intrachain disulfides connect cysteine 3-cysteine 34, cysteine 20-cysteine 39, and cysteine 24-cysteine 41.

The protein localises to the secreted. In terms of biological role, antibacterial protein. Strong activity against the Gram-positive bacteria M.luteus, B.megaterium and S.aureus. Reduced activity against Gram-positive bacterium B.subtilis and weak activity against Gram-negative bacterium X.japonicus. No detectable activity against the Gram-negative bacteria E.asbriae, E.coli, P.aeruginosa and S.marcescens. The chain is Defensin-B from Anomala cuprea (Cupreous chafer beetle).